A 314-amino-acid chain; its full sequence is tRNA(Ile)-lysidine synthase (314 aa).

37-42 serves as a coordination point for ATP; the sequence is SGGPDS.

The protein belongs to the tRNA(Ile)-lysidine synthase family.

The protein localises to the cytoplasm. It carries out the reaction cytidine(34) in tRNA(Ile2) + L-lysine + ATP = lysidine(34) in tRNA(Ile2) + AMP + diphosphate + H(+). Its function is as follows. Ligates lysine onto the cytidine present at position 34 of the AUA codon-specific tRNA(Ile) that contains the anticodon CAU, in an ATP-dependent manner. Cytidine is converted to lysidine, thus changing the amino acid specificity of the tRNA from methionine to isoleucine. This chain is tRNA(Ile)-lysidine synthase, found in Corynebacterium glutamicum (strain ATCC 13032 / DSM 20300 / JCM 1318 / BCRC 11384 / CCUG 27702 / LMG 3730 / NBRC 12168 / NCIMB 10025 / NRRL B-2784 / 534).